The following is a 138-amino-acid chain: Basic phospholipase A2 vurtoxin (138 aa).

Residues 1-16 form the signal peptide; that stretch reads MRTLWIVAVCLIGVEG. 7 disulfide bridges follow: C42/C131, C44/C60, C59/C111, C65/C138, C66/C104, C73/C97, and C91/C102. Residues Y43, G45, and G47 each contribute to the Ca(2+) site. H63 is an active-site residue. A Ca(2+)-binding site is contributed by D64. Residue D105 is part of the active site.

The cofactor is Ca(2+). Expressed by the venom gland.

It localises to the secreted. It catalyses the reaction a 1,2-diacyl-sn-glycero-3-phosphocholine + H2O = a 1-acyl-sn-glycero-3-phosphocholine + a fatty acid + H(+). Its function is as follows. Snake venom phospholipase A2 that may have a strong anticoagulant activity. Is able to suppress the acetylcholine (ACh)-evoked current mediated by alpha-7 (CHRNA7)-similar nAChRs in L.stagnalis neurons (IC(50)=10.5 uM) and to compete with alpha-bungarotoxin for binding to muscle- and alpha-7 neuronal nAChR types, as well as to AChBPs. In inhibition of alpha-bungarotoxin binding, this toxin is mostly active against T.californica nAChR (IC(50)=0.26 uM), it is moderately active against human alpha-7 nAChR (IC(50)=14 uM), and is not active against L.stagnalis and A.californica AChBP (IC(50)&gt;30 uM). This Vipera renardi (Steppe viper) protein is Basic phospholipase A2 vurtoxin.